The following is a 412-amino-acid chain: Serine hydroxymethyltransferase (412 aa).

Residues Leu112 and 116 to 118 contribute to the (6S)-5,6,7,8-tetrahydrofolate site; that span reads GHL. Lys221 is subject to N6-(pyridoxal phosphate)lysine. Glu237 is a (6S)-5,6,7,8-tetrahydrofolate binding site.

The protein belongs to the SHMT family. Homodimer. Pyridoxal 5'-phosphate is required as a cofactor.

The protein resides in the cytoplasm. The catalysed reaction is (6R)-5,10-methylene-5,6,7,8-tetrahydrofolate + glycine + H2O = (6S)-5,6,7,8-tetrahydrofolate + L-serine. Its pathway is one-carbon metabolism; tetrahydrofolate interconversion. The protein operates within amino-acid biosynthesis; glycine biosynthesis; glycine from L-serine: step 1/1. Catalyzes the reversible interconversion of serine and glycine with tetrahydrofolate (THF) serving as the one-carbon carrier. This reaction serves as the major source of one-carbon groups required for the biosynthesis of purines, thymidylate, methionine, and other important biomolecules. Also exhibits THF-independent aldolase activity toward beta-hydroxyamino acids, producing glycine and aldehydes, via a retro-aldol mechanism. In Malacoplasma penetrans (strain HF-2) (Mycoplasma penetrans), this protein is Serine hydroxymethyltransferase.